A 138-amino-acid polypeptide reads, in one-letter code: Sec-independent protein translocase protein TatB (138 aa).

Residues 1–21 form a helical membrane-spanning segment; that stretch reads MFDIGFSELLLIAVVALVVLG. Residues 116–138 form a disordered region; sequence VHHVHVPPPSTSTHGNNGQEKSQ. Residues 126 to 138 are compositionally biased toward polar residues; that stretch reads TSTHGNNGQEKSQ.

Belongs to the TatB family. The Tat system comprises two distinct complexes: a TatABC complex, containing multiple copies of TatA, TatB and TatC subunits, and a separate TatA complex, containing only TatA subunits. Substrates initially bind to the TatABC complex, which probably triggers association of the separate TatA complex to form the active translocon.

It localises to the cell inner membrane. Its function is as follows. Part of the twin-arginine translocation (Tat) system that transports large folded proteins containing a characteristic twin-arginine motif in their signal peptide across membranes. Together with TatC, TatB is part of a receptor directly interacting with Tat signal peptides. TatB may form an oligomeric binding site that transiently accommodates folded Tat precursor proteins before their translocation. This Xylella fastidiosa (strain Temecula1 / ATCC 700964) protein is Sec-independent protein translocase protein TatB.